Reading from the N-terminus, the 359-residue chain is Peptide chain release factor 1 (359 aa).

Residue Gln235 is modified to N5-methylglutamine. The segment at 283-305 (QKAESERSASRKTQVGSGDRSER) is disordered.

This sequence belongs to the prokaryotic/mitochondrial release factor family. Methylated by PrmC. Methylation increases the termination efficiency of RF1.

The protein localises to the cytoplasm. Functionally, peptide chain release factor 1 directs the termination of translation in response to the peptide chain termination codons UAG and UAA. This chain is Peptide chain release factor 1, found in Bartonella bacilliformis (strain ATCC 35685 / KC583 / Herrer 020/F12,63).